The sequence spans 274 residues: Syntaxin-12 (274 aa).

Disordered stretches follow at residues 1–20 (MSYG…PQPR) and 128–147 (EKES…EDRQ). Residue Ser-2 is modified to N-acetylserine. Topologically, residues 2–250 (SYGPLDMYRN…AYYQKKSRKK (249 aa)) are cytoplasmic. The stretch at 33 to 130 (IQRISQATAQ…QRKVSEKEKE (98 aa)) forms a coiled coil. 4 positions are modified to phosphoserine: Ser-139, Ser-142, Ser-218, and Ser-225. A t-SNARE coiled-coil homology domain is found at 178-240 (LELIKERETA…ERATDQLQRA (63 aa)). Residues 251 to 271 (MCILVLVLSVIVTVLVVVIWV) form a helical; Anchor for type IV membrane protein membrane-spanning segment. Topologically, residues 272–274 (ASK) are vesicular.

The protein belongs to the syntaxin family. In terms of assembly, associates with the BLOC-1 complex. Interacts with BLOC1S6. Interacts with NAPA and SNAP23. Identified in a complex containing STX6, STX12, VAMP4 and VTI1A. Interacts with GRIPAP1. Forms a complex with GRIP1, GRIA2 and NSG1; controls the intracellular fate of AMPAR and the endosomal sorting of the GRIA2 subunit toward recycling and membrane targeting. Interacts with NSG1. Interacts with TPC1. Interacts (via N-terminus) with VPS13B.

Its subcellular location is the endosome membrane. It localises to the golgi apparatus membrane. The protein resides in the endomembrane system. It is found in the early endosome membrane. The protein localises to the recycling endosome membrane. Its function is as follows. SNARE promoting fusion of transport vesicles with target membranes. Together with SNARE STX6, promotes movement of vesicles from endosomes to the cell membrane, and may therefore function in the endocytic recycling pathway. Through complex formation with GRIP1, GRIA2 and NSG1 controls the intracellular fate of AMPAR and the endosomal sorting of the GRIA2 subunit toward recycling and membrane targeting. The sequence is that of Syntaxin-12 (Stx12) from Mus musculus (Mouse).